An 873-amino-acid polypeptide reads, in one-letter code: Leucine--tRNA ligase (873 aa).

Residues 48 to 58 (PYPSGKLHMGH) carry the 'HIGH' region motif. Residues 636–640 (KMSKS) carry the 'KMSKS' region motif. Lys639 contributes to the ATP binding site.

Belongs to the class-I aminoacyl-tRNA synthetase family.

The protein localises to the cytoplasm. It catalyses the reaction tRNA(Leu) + L-leucine + ATP = L-leucyl-tRNA(Leu) + AMP + diphosphate. The chain is Leucine--tRNA ligase from Cupriavidus pinatubonensis (strain JMP 134 / LMG 1197) (Cupriavidus necator (strain JMP 134)).